Reading from the N-terminus, the 1285-residue chain is Transmembrane channel-like protein 1 (1285 aa).

The tract at residues 1-29 (MQEAARRASLRKEHTPTNEKFGDLSKQDS) is disordered. Over 1–164 (MQEAARRASL…KIKRIESHFG (164 aa)) the chain is Cytoplasmic. Residues 165-202 (SVVSSYFTFLRWIVFVNIMITLIALVFVVLPETLADSV) form a helical membrane-spanning segment. Topologically, residues 203 to 260 (ANEGRFNRTKTRKQIPANERVHADELAVVWHYDGYLRYSPLFYGYYSDDPFLGNKIKY) are extracellular. N-linked (GalNAc...) asparagine glycosylation occurs at asparagine 209. A helical transmembrane segment spans residues 261–292 (ALPLAYFMVTLTIFAYSFFAILRKMAANARMS). The Cytoplasmic segment spans residues 293-349 (KLSGSKAEQYIFNWKLFTGWDYTIGNSETASNTVMAVVIKLRESIADIKKDAHGKFR). The helical transmembrane segment at 350–381 (LLQFSLRVFANIIICAMLGFSIYCIIFAVQKS) threads the bilayer. The Extracellular segment spans residues 382–388 (QVQDDGN). The chain crosses the membrane as a helical span at residues 389–416 (LFTKNQVPSVVSTITHVFPMIFDLIGKM). The Cytoplasmic segment spans residues 417–420 (ENYH). Residues 421–455 (PRTALRAHLGRVLILYTVNYITLIFALFEKMTALR) form a helical membrane-spanning segment. Residues 456-667 (DRVNSTSTSS…NHDGHNNDIC (212 aa)) are Extracellular-facing. The interval 458 to 488 (VNSTSTSSSHRTKRQQGGWNPNMQRPPPYAS) is disordered. A disulfide bridge links cysteine 667 with cysteine 816. The chain crosses the membrane as a helical span at residues 668 to 705 (WETIIGQEIVKLVTMDLIFTILSILVIDLFRGLWIKYC). Residues 696-720 (LFRGLWIKYCSSWWCWDIETTFPEY) form a required for interaction with tmie region. The Cytoplasmic segment spans residues 706-724 (SSWWCWDIETTFPEYGEFK). Residues 725 to 745 (VAENVLHIINNQGMIWLGLFF) traverse the membrane as a helical segment. Residues 746–748 (APL) are Extracellular-facing. Residues 749-771 (LPAINNIKLIILMYIRGWAVMTC) traverse the membrane as a helical segment. The required for interaction with tmie stretch occupies residues 766-773 (WAVMTCNV). Over 772 to 785 (NVPAREIFRASRSS) the chain is Cytoplasmic. Residues 786–809 (NFYLGILLIWLLLCTLPVGFVIAS) traverse the membrane as a helical segment. Over 810 to 852 (MSPSRSCGPFARYQHFYTVVTREIEKRVDQTVLSYIRHIASPG) the chain is Extracellular. Residues 853–886 (VVIPIILFLILIIYFLFSLVRGLREANTDLQAQL) traverse the membrane as a helical segment. Topologically, residues 887-1285 (VHERTEEKKK…DEDDSPRQID (399 aa)) are cytoplasmic. 2 disordered regions span residues 940–962 (ADHALASDSSEESDINEDEDDER) and 1114–1285 (TIKE…RQID). The span at 948–961 (SSEESDINEDEDDE) shows a compositional bias: acidic residues. Composition is skewed to basic and acidic residues over residues 1121 to 1131 (DPGKSDKKQTS), 1146 to 1156 (DEARALREKMK), and 1167 to 1182 (TVEEKPKGGKSSESEF). Residues 1197–1208 (TEEENEEEETDS) show a composition bias toward acidic residues.

The protein belongs to the TMC family. Homodimer. Interacts with calm-1 and tmie to form the MET channel. As to expression, expressed in the ASH polymodal avoidance neurons. Also expressed in other sensory neurons, including the ADF, ASE, ADL, AQR, PQR, URX and PHA cells.

It is found in the cell membrane. It catalyses the reaction Na(+)(in) = Na(+)(out). It carries out the reaction Ca(2+)(in) = Ca(2+)(out). The enzyme catalyses K(+)(in) = K(+)(out). Functionally, pore-forming subunit of the mechanotransducer (MET) non-selective cation channel complex. The MET complex is composed of symmetric dimeric MET channels, each channel comprising two copies of pore-forming ion-conducting transmembrane TMC subunits and auxiliary proteins including the transmembrane inner ear protein/tmie, the calcium-binding protein/calm-1 and arrestin domain protein arrd-6. Sodium ions are the most permeable, whereas calcium and potassium have lower indices. Sodium-sensor ion channel that acts specifically in salt taste chemosensation. Required for salt-evoked neuronal activity and behavioral avoidance of high concentrations of NaCl. The polypeptide is Transmembrane channel-like protein 1 (tmc-1) (Caenorhabditis elegans).